Reading from the N-terminus, the 386-residue chain is ADP,ATP carrier protein 1, mitochondrial (386 aa).

The N-terminal 76 residues, 1–76 (MDQVQHPSVM…PSTASAICVQ (76 aa)), are a transit peptide targeting the mitochondrion. Solcar repeat units lie at residues 84–177 (SSFA…FKRL), 189–281 (KWFA…LKPV), and 289–375 (DSFF…LQLI). The next 5 membrane-spanning stretches (helical) occupy residues 86–113 (FAID…VKLL), 154–178 (TANV…KRLF), 187–207 (YWKW…SSLL), 257–278 (FNIS…YDSL), and 292–312 (FASF…SYPI). The ADP site is built by Arg159 and Lys171. An ADP-binding site is contributed by Arg316. Residues 316–321 (RRRMMM) are important for transport activity. Residues 316 to 321 (RRRMMM) carry the Nucleotide carrier signature motif motif. A helical membrane pass occupies residues 352–372 (AGSNILRAIAGAGVLAGYDKL).

This sequence belongs to the mitochondrial carrier (TC 2.A.29) family. Monomer.

It localises to the mitochondrion inner membrane. The enzyme catalyses ADP(in) + ATP(out) = ADP(out) + ATP(in). With respect to regulation, the matrix-open state (m-state) is inhibited by the membrane-permeable bongkrekic acid (BKA). The cytoplasmic-open state (c-state) is inhibited by the membrane-impermeable toxic inhibitor carboxyatractyloside (CATR). Its function is as follows. ADP:ATP antiporter that mediates import of ADP into the mitochondrial matrix for ATP synthesis, and export of ATP out to fuel the cell. Cycles between the cytoplasmic-open state (c-state) and the matrix-open state (m-state): operates by the alternating access mechanism with a single substrate-binding site intermittently exposed to either the cytosolic (c-state) or matrix (m-state) side of the inner mitochondrial membrane. The sequence is that of ADP,ATP carrier protein 1, mitochondrial (ANT1) from Gossypium hirsutum (Upland cotton).